Here is a 302-residue protein sequence, read N- to C-terminus: MKQLVSMEDLTNEEIYSLIETAIEYKKGNKPNKFTDKYVSNLFFENSTRTKCSFEMAERQLGLQEIPFETSTSSVKKGESLYDTCKTLESIGVDALVIRHPQNDYYKELEGLNIPVINGGDGSGQHPTQSLLDIMTIYEEYKDFKDLNVLICGDIKNSRVARSNYQALTALGANVKFAAPGEWVDESLDAPYVKIDDVIEETDIVMLLRVQHERHDGELSFDPHEYHEKYGLTKDRYNRMKSEAIVMHPAPVNRGVEIDSDLVEAPKARIFKQMKNGMFLRMSVITHILAEKEEGVIFDVAN.

Carbamoyl phosphate is bound by residues arginine 49 and threonine 50. Lysine 77 is an L-aspartate binding site. Residues arginine 99, histidine 126, and glutamine 129 each contribute to the carbamoyl phosphate site. L-aspartate contacts are provided by arginine 159 and arginine 209. Carbamoyl phosphate-binding residues include alanine 250 and proline 251.

The protein belongs to the aspartate/ornithine carbamoyltransferase superfamily. ATCase family. Heterododecamer (2C3:3R2) of six catalytic PyrB chains organized as two trimers (C3), and six regulatory PyrI chains organized as three dimers (R2).

It catalyses the reaction carbamoyl phosphate + L-aspartate = N-carbamoyl-L-aspartate + phosphate + H(+). Its pathway is pyrimidine metabolism; UMP biosynthesis via de novo pathway; (S)-dihydroorotate from bicarbonate: step 2/3. In terms of biological role, catalyzes the condensation of carbamoyl phosphate and aspartate to form carbamoyl aspartate and inorganic phosphate, the committed step in the de novo pyrimidine nucleotide biosynthesis pathway. The chain is Aspartate carbamoyltransferase catalytic subunit from Staphylococcus carnosus (strain TM300).